Reading from the N-terminus, the 396-residue chain is CCA-adding enzyme (396 aa).

ATP-binding residues include glycine 27 and arginine 30. CTP contacts are provided by glycine 27 and arginine 30. Mg(2+)-binding residues include aspartate 40 and aspartate 42. ATP contacts are provided by arginine 111, aspartate 154, arginine 157, arginine 160, and arginine 163. CTP contacts are provided by arginine 111, aspartate 154, arginine 157, arginine 160, and arginine 163.

This sequence belongs to the tRNA nucleotidyltransferase/poly(A) polymerase family. Bacterial CCA-adding enzyme type 3 subfamily. As to quaternary structure, homodimer. Mg(2+) serves as cofactor.

The enzyme catalyses a tRNA precursor + 2 CTP + ATP = a tRNA with a 3' CCA end + 3 diphosphate. It carries out the reaction a tRNA with a 3' CCA end + 2 CTP + ATP = a tRNA with a 3' CCACCA end + 3 diphosphate. Catalyzes the addition and repair of the essential 3'-terminal CCA sequence in tRNAs without using a nucleic acid template. Adds these three nucleotides in the order of C, C, and A to the tRNA nucleotide-73, using CTP and ATP as substrates and producing inorganic pyrophosphate. tRNA 3'-terminal CCA addition is required both for tRNA processing and repair. Also involved in tRNA surveillance by mediating tandem CCA addition to generate a CCACCA at the 3' terminus of unstable tRNAs. While stable tRNAs receive only 3'-terminal CCA, unstable tRNAs are marked with CCACCA and rapidly degraded. The sequence is that of CCA-adding enzyme from Bacillus velezensis (strain DSM 23117 / BGSC 10A6 / LMG 26770 / FZB42) (Bacillus amyloliquefaciens subsp. plantarum).